The following is a 188-amino-acid chain: Elongation factor P (188 aa).

Belongs to the elongation factor P family.

Its subcellular location is the cytoplasm. It functions in the pathway protein biosynthesis; polypeptide chain elongation. In terms of biological role, involved in peptide bond synthesis. Stimulates efficient translation and peptide-bond synthesis on native or reconstituted 70S ribosomes in vitro. Probably functions indirectly by altering the affinity of the ribosome for aminoacyl-tRNA, thus increasing their reactivity as acceptors for peptidyl transferase. The protein is Elongation factor P (efp) of Rickettsia prowazekii (strain Madrid E).